The primary structure comprises 120 residues: NAD(P)H-quinone oxidoreductase subunit 3 (120 aa).

Helical transmembrane passes span 10 to 30, 64 to 84, and 89 to 109; these read FLGF…TNLI, MFAL…PWAV, and LGLL…IALA.

It belongs to the complex I subunit 3 family. In terms of assembly, NDH-1 can be composed of about 15 different subunits; different subcomplexes with different compositions have been identified which probably have different functions.

The protein resides in the cellular thylakoid membrane. It catalyses the reaction a plastoquinone + NADH + (n+1) H(+)(in) = a plastoquinol + NAD(+) + n H(+)(out). The catalysed reaction is a plastoquinone + NADPH + (n+1) H(+)(in) = a plastoquinol + NADP(+) + n H(+)(out). NDH-1 shuttles electrons from an unknown electron donor, via FMN and iron-sulfur (Fe-S) centers, to quinones in the respiratory and/or the photosynthetic chain. The immediate electron acceptor for the enzyme in this species is believed to be plastoquinone. Couples the redox reaction to proton translocation, and thus conserves the redox energy in a proton gradient. Cyanobacterial NDH-1 also plays a role in inorganic carbon-concentration. In Prochlorococcus marinus (strain AS9601), this protein is NAD(P)H-quinone oxidoreductase subunit 3.